The following is a 527-amino-acid chain: EGF domain-specific O-linked N-acetylglucosamine transferase (527 aa).

The first 17 residues, 1–17 (MLKLLVLGVLLHDVSLS), serve as a signal peptide directing secretion. Residues 295–297 (DYD) carry the Required for optimal activity motif. N-linked (GlcNAc...) asparagine glycosylation occurs at Asn-354. A Prevents secretion from ER motif is present at residues 524–527 (RDEL).

Belongs to the glycosyltransferase 61 family.

The protein resides in the endoplasmic reticulum lumen. It carries out the reaction L-seryl-[protein] + UDP-N-acetyl-alpha-D-glucosamine = 3-O-(N-acetyl-beta-D-glucosaminyl)-L-seryl-[protein] + UDP + H(+). The enzyme catalyses L-threonyl-[protein] + UDP-N-acetyl-alpha-D-glucosamine = 3-O-(N-acetyl-beta-D-glucosaminyl)-L-threonyl-[protein] + UDP + H(+). Catalyzes the transfer of a single N-acetylglucosamine from UDP-GlcNAc to a serine or threonine residue in extracellular proteins resulting in their modification with a beta-linked N-acetylglucosamine (O-GlcNAc). Specifically glycosylates the Thr residue located between the fifth and sixth conserved cysteines of folded EGF-like domains. This is EGF domain-specific O-linked N-acetylglucosamine transferase (EOGT) from Canis lupus familiaris (Dog).